A 612-amino-acid chain; its full sequence is MSHPSWLPPKSTGEPLGHVPARMETTHSFGNPSISVSTQQPPKKFAPVVAPKPKYNPYKQPGGEGDFLPPPPPPLDDSSALPSISGNFPPPPPLDEEAFKVQGNPGGKTLEERRSSLDAEIDSLTSILADLECSSPYKPRPPQSSTGSTASPPVSTPVTGHKRMVIPNQPPLTATKKSTLKPQPAPQAGPIPVAPIGTLKPQPQPVPASYTTASTSSRPTFNVQVKSAQPSPHYMAAPSSGQIYGSGPQGYNTQPVPVSGQCPPPSTRGGMDYAYIPPPGLQPEPGYGYAPNQGRYYEGYYAAGPGYGGRNDSDPTYGQQGHPNTWKREPGYTPPGAGNQNPPGMYPVTGPKKTYITDPVSAPCAPPLQPKGGHSGQLGPSSVAPSFRPEDELEHLTKKMLYDMENPPADEYFGRCARCGENVVGEGTGCTAMDQVFHVDCFTCIICNNKLRGQPFYAVEKKAYCEPCYINTLEQCNVCSKPIMERILRATGKAYHPHCFTCVMCHRSLDGIPFTVDAGGLIHCIEDFHKKFAPRCSVCKEPIMPAPGQEETVRIVALDRDFHVHCYRCEDCGGLLSEGDNQGCYPLDGHILCKTCNSARIRVLTAKASTDL.

Disordered regions lie at residues 1–118 (MSHP…SSLD) and 132–219 (ECSS…SSRP). The segment covering 26-40 (THSFGNPSISVSTQQ) has biased composition (polar residues). Over residues 41–53 (PPKKFAPVVAPKP) the composition is skewed to low complexity. The residue at position 108 (Lys-108) is an N6-acetyllysine. A phosphoserine mark is found at Ser-116 and Ser-151. Polar residues-rich tracts occupy residues 143-158 (QSST…STPV) and 171-181 (PLTATKKSTLK). Over residues 183–193 (QPAPQAGPIPV) the composition is skewed to pro residues. Residues 209–219 (SYTTASTSSRP) are compositionally biased toward polar residues. Tyr-244 and Tyr-301 each carry phosphotyrosine. The interval 307 to 387 (YGGRNDSDPT…LGPSSVAPSF (81 aa)) is disordered. Polar residues predominate over residues 314-323 (DPTYGQQGHP). Lys-327 is covalently cross-linked (Glycyl lysine isopeptide (Lys-Gly) (interchain with G-Cter in SUMO1)). The residue at position 333 (Thr-333) is a Phosphothreonine. Ser-375 carries the phosphoserine modification. LIM zinc-binding domains are found at residues 414–473 (GRCA…INTL), 474–534 (EQCN…KFAP), and 535–603 (RCSV…RIRV).

The protein belongs to the zyxin/ajuba family. As to quaternary structure, interacts with VASP, with PDZ domains of SCRIB and with ACTN1/alpha-actinin. In terms of tissue distribution, expressed in a wide variety of tissues but no or very low expression in brain and peripheral leukocytes.

Its subcellular location is the nucleus. The protein localises to the cytoplasm. It is found in the cell junction. The protein resides in the cell membrane. Functionally, may play a structural role at sites of cell adhesion in maintaining cell shape and motility. In addition to these structural functions, it may also be implicated in signaling events and activation of gene transcription. May be involved in signal transduction from cell adhesion sites to the nucleus allowing successful integration of signals arising from soluble factors and cell-cell adhesion sites. Also suggested to serve as a scaffold protein upon which distinct protein complexes are assembled in the cytoplasm and in the nucleus. In Homo sapiens (Human), this protein is Lipoma-preferred partner (LPP).